Here is a 1397-residue protein sequence, read N- to C-terminus: DNA-directed RNA polymerase subunit beta' (1397 aa).

The Zn(2+) site is built by Cys71, Cys73, Cys86, and Cys89. The Mg(2+) site is built by Asp462, Asp464, and Asp466. Cys811, Cys885, Cys892, and Cys895 together coordinate Zn(2+). The interval 1368–1397 (QNRDDKILEDQGGATPTASTEIKEPAEGAA) is disordered. Positions 1388–1397 (EIKEPAEGAA) are enriched in basic and acidic residues.

This sequence belongs to the RNA polymerase beta' chain family. As to quaternary structure, the RNAP catalytic core consists of 2 alpha, 1 beta, 1 beta' and 1 omega subunit. When a sigma factor is associated with the core the holoenzyme is formed, which can initiate transcription. Mg(2+) serves as cofactor. The cofactor is Zn(2+).

The enzyme catalyses RNA(n) + a ribonucleoside 5'-triphosphate = RNA(n+1) + diphosphate. DNA-dependent RNA polymerase catalyzes the transcription of DNA into RNA using the four ribonucleoside triphosphates as substrates. The protein is DNA-directed RNA polymerase subunit beta' of Parvibaculum lavamentivorans (strain DS-1 / DSM 13023 / NCIMB 13966).